Consider the following 217-residue polypeptide: Ranaspumin (217 aa).

4 disulfides stabilise this stretch: C18/C67, C38/C114, C125/C168, and C146/C207.

Monomer. Exclusively expressed in females in the early oviduct, the glandular part of the oviduct (pars convoluta dilata) and in the cloaca.

It is found in the secreted. In terms of biological role, acts as a surfactant. Is the major protein constituent (45%) of foam nests. Has no antimicrobial activity, no larvicidal activity, and is not toxic to mice. The protein is Ranaspumin of Leptodactylus vastus (Northeastern pepper frog).